Here is a 187-residue protein sequence, read N- to C-terminus: Holliday junction branch migration complex subunit RuvA (187 aa).

Residues 1 to 64 (MIEYVRGIIE…EDGFQIFGFK (64 aa)) form a domain I region. The segment at 65–136 (TKEELDLFEK…ELKDKLPKEI (72 aa)) is domain II. Positions 136 to 139 (IVFE) are flexible linker. The domain III stretch occupies residues 140-187 (GDNNFSNEALEALLALGYTKSEAIYALADITCDSVEDAVKQALKKLMK).

This sequence belongs to the RuvA family. Homotetramer. Forms an RuvA(8)-RuvB(12)-Holliday junction (HJ) complex. HJ DNA is sandwiched between 2 RuvA tetramers; dsDNA enters through RuvA and exits via RuvB. An RuvB hexamer assembles on each DNA strand where it exits the tetramer. Each RuvB hexamer is contacted by two RuvA subunits (via domain III) on 2 adjacent RuvB subunits; this complex drives branch migration. In the full resolvosome a probable DNA-RuvA(4)-RuvB(12)-RuvC(2) complex forms which resolves the HJ.

It is found in the cytoplasm. Functionally, the RuvA-RuvB-RuvC complex processes Holliday junction (HJ) DNA during genetic recombination and DNA repair, while the RuvA-RuvB complex plays an important role in the rescue of blocked DNA replication forks via replication fork reversal (RFR). RuvA specifically binds to HJ cruciform DNA, conferring on it an open structure. The RuvB hexamer acts as an ATP-dependent pump, pulling dsDNA into and through the RuvAB complex. HJ branch migration allows RuvC to scan DNA until it finds its consensus sequence, where it cleaves and resolves the cruciform DNA. The sequence is that of Holliday junction branch migration complex subunit RuvA from Thermoanaerobacter pseudethanolicus (strain ATCC 33223 / 39E) (Clostridium thermohydrosulfuricum).